Here is a 117-residue protein sequence, read N- to C-terminus: Ribonuclease P protein component (117 aa).

It belongs to the RnpA family. Consists of a catalytic RNA component (M1 or rnpB) and a protein subunit.

The enzyme catalyses Endonucleolytic cleavage of RNA, removing 5'-extranucleotides from tRNA precursor.. Functionally, RNaseP catalyzes the removal of the 5'-leader sequence from pre-tRNA to produce the mature 5'-terminus. It can also cleave other RNA substrates such as 4.5S RNA. The protein component plays an auxiliary but essential role in vivo by binding to the 5'-leader sequence and broadening the substrate specificity of the ribozyme. This is Ribonuclease P protein component from Aliivibrio salmonicida (strain LFI1238) (Vibrio salmonicida (strain LFI1238)).